Here is a 601-residue protein sequence, read N- to C-terminus: Elongation factor 4 (601 aa).

The region spanning 6-188 (NRIRNFCIIA…QVVTKIAPPK (183 aa)) is the tr-type G domain. Residues 18-23 (DHGKST) and 135-138 (NKID) contribute to the GTP site.

This sequence belongs to the TRAFAC class translation factor GTPase superfamily. Classic translation factor GTPase family. LepA subfamily.

It is found in the cell membrane. It carries out the reaction GTP + H2O = GDP + phosphate + H(+). Functionally, required for accurate and efficient protein synthesis under certain stress conditions. May act as a fidelity factor of the translation reaction, by catalyzing a one-codon backward translocation of tRNAs on improperly translocated ribosomes. Back-translocation proceeds from a post-translocation (POST) complex to a pre-translocation (PRE) complex, thus giving elongation factor G a second chance to translocate the tRNAs correctly. Binds to ribosomes in a GTP-dependent manner. This chain is Elongation factor 4, found in Desulforamulus reducens (strain ATCC BAA-1160 / DSM 100696 / MI-1) (Desulfotomaculum reducens).